The following is a 202-amino-acid chain: Holliday junction branch migration complex subunit RuvA (202 aa).

Residues 1–65 (MIAYVEGRVA…EDALELFGFS (65 aa)) form a domain I region. A domain II region spans residues 66 to 144 (TWDERQTFMV…VEDLPAGLVL (79 aa)). A flexible linker region spans residues 145 to 155 (AGGAAPGGVFR). Residues 155–202 (RDALAGLGNLGYLEDEAAPVLKEVLKAEPDLDVAGALRAALKALARGR) are domain III.

The protein belongs to the RuvA family. Homotetramer. Forms an RuvA(8)-RuvB(12)-Holliday junction (HJ) complex. HJ DNA is sandwiched between 2 RuvA tetramers; dsDNA enters through RuvA and exits via RuvB. An RuvB hexamer assembles on each DNA strand where it exits the tetramer. Each RuvB hexamer is contacted by two RuvA subunits (via domain III) on 2 adjacent RuvB subunits; this complex drives branch migration. In the full resolvosome a probable DNA-RuvA(4)-RuvB(12)-RuvC(2) complex forms which resolves the HJ.

The protein localises to the cytoplasm. Functionally, the RuvA-RuvB-RuvC complex processes Holliday junction (HJ) DNA during genetic recombination and DNA repair, while the RuvA-RuvB complex plays an important role in the rescue of blocked DNA replication forks via replication fork reversal (RFR). RuvA specifically binds to HJ cruciform DNA, conferring on it an open structure. The RuvB hexamer acts as an ATP-dependent pump, pulling dsDNA into and through the RuvAB complex. HJ branch migration allows RuvC to scan DNA until it finds its consensus sequence, where it cleaves and resolves the cruciform DNA. The chain is Holliday junction branch migration complex subunit RuvA from Nitratidesulfovibrio vulgaris (strain DSM 19637 / Miyazaki F) (Desulfovibrio vulgaris).